The following is a 435-amino-acid chain: Oxaloacetate decarboxylase beta chain (435 aa).

A run of 9 helical transmembrane segments spans residues 13 to 35 (IMHI…WLAI), 42 to 64 (LLLL…LAMT), 123 to 145 (ILAL…FMGV), 165 to 187 (AAAQ…LGII), 215 to 237 (LAPE…VPLI), 267 to 289 (IVFP…PLLG), 309 to 328 (TAQN…SVGA), 340 to 362 (TLGI…VIMA), and 404 to 426 (FLLM…AAGI).

The protein belongs to the GcdB/MmdB/OadB family. In terms of assembly, heterotrimer of an alpha, a beta and a gamma subunit. Na(+) serves as cofactor.

It localises to the cell membrane. It catalyses the reaction oxaloacetate + 2 Na(+)(in) + H(+) = pyruvate + 2 Na(+)(out) + CO2. In terms of biological role, catalyzes the decarboxylation of oxaloacetate coupled to Na(+) translocation. The polypeptide is Oxaloacetate decarboxylase beta chain (oadB) (Haemophilus ducreyi (strain 35000HP / ATCC 700724)).